The following is an 89-amino-acid chain: Small ribosomal subunit protein uS15 (89 aa).

This sequence belongs to the universal ribosomal protein uS15 family. In terms of assembly, part of the 30S ribosomal subunit. Forms a bridge to the 50S subunit in the 70S ribosome, contacting the 23S rRNA.

One of the primary rRNA binding proteins, it binds directly to 16S rRNA where it helps nucleate assembly of the platform of the 30S subunit by binding and bridging several RNA helices of the 16S rRNA. Its function is as follows. Forms an intersubunit bridge (bridge B4) with the 23S rRNA of the 50S subunit in the ribosome. The polypeptide is Small ribosomal subunit protein uS15 (Tolumonas auensis (strain DSM 9187 / NBRC 110442 / TA 4)).